Reading from the N-terminus, the 307-residue chain is tRNA pseudouridine synthase B (307 aa).

Aspartate 48 functions as the Nucleophile in the catalytic mechanism.

It belongs to the pseudouridine synthase TruB family. Type 1 subfamily.

It catalyses the reaction uridine(55) in tRNA = pseudouridine(55) in tRNA. In terms of biological role, responsible for synthesis of pseudouridine from uracil-55 in the psi GC loop of transfer RNAs. This Pasteurella multocida (strain Pm70) protein is tRNA pseudouridine synthase B.